Consider the following 407-residue polypeptide: Tryptophan synthase beta chain (407 aa).

At Lys91 the chain carries N6-(pyridoxal phosphate)lysine.

It belongs to the TrpB family. Tetramer of two alpha and two beta chains. It depends on pyridoxal 5'-phosphate as a cofactor.

It carries out the reaction (1S,2R)-1-C-(indol-3-yl)glycerol 3-phosphate + L-serine = D-glyceraldehyde 3-phosphate + L-tryptophan + H2O. Its pathway is amino-acid biosynthesis; L-tryptophan biosynthesis; L-tryptophan from chorismate: step 5/5. In terms of biological role, the beta subunit is responsible for the synthesis of L-tryptophan from indole and L-serine. The polypeptide is Tryptophan synthase beta chain (Streptococcus pneumoniae (strain 70585)).